The chain runs to 224 residues: Ribosomal RNA large subunit methyltransferase E (224 aa).

5 residues coordinate S-adenosyl-L-methionine: G64, W66, D97, D113, and D138. The active-site Proton acceptor is the K178.

It belongs to the class I-like SAM-binding methyltransferase superfamily. RNA methyltransferase RlmE family.

The protein localises to the cytoplasm. It catalyses the reaction uridine(2552) in 23S rRNA + S-adenosyl-L-methionine = 2'-O-methyluridine(2552) in 23S rRNA + S-adenosyl-L-homocysteine + H(+). Specifically methylates the uridine in position 2552 of 23S rRNA at the 2'-O position of the ribose in the fully assembled 50S ribosomal subunit. The chain is Ribosomal RNA large subunit methyltransferase E from Methylibium petroleiphilum (strain ATCC BAA-1232 / LMG 22953 / PM1).